The chain runs to 214 residues: Small ribosomal subunit protein uS5 (214 aa).

An S5 DRBM domain is found at 54–117 (LKYEVVDIKV…RDAKMNIIPV (64 aa)).

It belongs to the universal ribosomal protein uS5 family. As to quaternary structure, part of the 30S ribosomal subunit. Contacts protein S4.

Its function is as follows. With S4 and S12 plays an important role in translational accuracy. The protein is Small ribosomal subunit protein uS5 of Saccharolobus solfataricus (strain ATCC 35092 / DSM 1617 / JCM 11322 / P2) (Sulfolobus solfataricus).